The primary structure comprises 131 residues: Global transcriptional regulator Spx 2 (131 aa).

C10 and C13 are disulfide-bonded.

It belongs to the ArsC family. Spx subfamily. As to quaternary structure, interacts with the C-terminal domain of the alpha subunit of the RNAP.

The protein localises to the cytoplasm. Functionally, global transcriptional regulator that plays a key role in stress response and exerts either positive or negative regulation of genes. Acts by interacting with the C-terminal domain of the alpha subunit of the RNA polymerase (RNAP). This interaction can enhance binding of RNAP to the promoter region of target genes and stimulate their transcription, or block interaction of RNAP with activator. The polypeptide is Global transcriptional regulator Spx 2 (Bacillus cereus (strain ATCC 14579 / DSM 31 / CCUG 7414 / JCM 2152 / NBRC 15305 / NCIMB 9373 / NCTC 2599 / NRRL B-3711)).